The sequence spans 387 residues: S-adenosylmethionine synthase (387 aa).

His19 contributes to the ATP binding site. Asp21 is a binding site for Mg(2+). Position 47 (Glu47) interacts with K(+). Residue Gln103 participates in L-methionine binding. Positions 103–113 (QSPDIAQGVEL) are flexible loop. Residues 167 to 169 (DMK), 233 to 234 (RF), Asp242, 248 to 249 (RK), Ala265, and Lys269 each bind ATP. Asp242 lines the L-methionine pocket. Lys273 is a binding site for L-methionine.

The protein belongs to the AdoMet synthase family. Homotetramer; dimer of dimers. Mg(2+) serves as cofactor. It depends on K(+) as a cofactor.

Its subcellular location is the cytoplasm. It catalyses the reaction L-methionine + ATP + H2O = S-adenosyl-L-methionine + phosphate + diphosphate. The protein operates within amino-acid biosynthesis; S-adenosyl-L-methionine biosynthesis; S-adenosyl-L-methionine from L-methionine: step 1/1. Functionally, catalyzes the formation of S-adenosylmethionine (AdoMet) from methionine and ATP. The overall synthetic reaction is composed of two sequential steps, AdoMet formation and the subsequent tripolyphosphate hydrolysis which occurs prior to release of AdoMet from the enzyme. The sequence is that of S-adenosylmethionine synthase from Mycoplasma capricolum subsp. capricolum (strain California kid / ATCC 27343 / NCTC 10154).